A 218-amino-acid chain; its full sequence is Thiopurine S-methyltransferase (218 aa).

Residues tryptophan 10, leucine 45, glutamate 66, and arginine 123 each contribute to the S-adenosyl-L-methionine site.

Belongs to the class I-like SAM-binding methyltransferase superfamily. TPMT family.

The protein localises to the cytoplasm. It catalyses the reaction S-adenosyl-L-methionine + a thiopurine = S-adenosyl-L-homocysteine + a thiopurine S-methylether.. The polypeptide is Thiopurine S-methyltransferase (Shewanella sp. (strain MR-7)).